The sequence spans 248 residues: MVESSDENDQASSFASTEDLKELRFVFWFSVLIPIFFIALIIIKRYHSCTYQKNRLLRSIFCCMSIDDEEELETDMYDLPIVEPSITLPKYSASLQENERLVGIEGEREGIDVVLNFSKAGEGGVNPYPSFDTPNARILQLRQLAKLKKHGPRISYHGIGIGRCNGNRVLPPYPEPALLPEAPNTREASNNTYLYGFSNNFINISRTLNLRYPSASASISDSLPPPYQVLSVPSVTSTHAFSNNANQT.

A helical transmembrane segment spans residues 23-43; it reads LRFVFWFSVLIPIFFIALIII.

The protein localises to the membrane. Functionally, has a role in meiosis. This Schizosaccharomyces pombe (strain 972 / ATCC 24843) (Fission yeast) protein is Meiotically up-regulated gene 110 protein (mug110).